Here is a 152-residue protein sequence, read N- to C-terminus: MSKPIAENRRARFDYFIEETFEAGIMLTGTEVKSLRTGRANIAESYASVEGREIVLINADIPPYGHANRFNHEPRRHRKLLLHRRQIDKLIGAVQREGRTLVPIKLYWNDKGLAKLEVGLAKGKKLHDKRDTAAERDWQRDKARLMKGDRGD.

The tract at residues 124-152 (KKLHDKRDTAAERDWQRDKARLMKGDRGD) is disordered. A compositionally biased stretch (basic and acidic residues) spans 128–152 (DKRDTAAERDWQRDKARLMKGDRGD).

Belongs to the SmpB family.

The protein resides in the cytoplasm. Its function is as follows. Required for rescue of stalled ribosomes mediated by trans-translation. Binds to transfer-messenger RNA (tmRNA), required for stable association of tmRNA with ribosomes. tmRNA and SmpB together mimic tRNA shape, replacing the anticodon stem-loop with SmpB. tmRNA is encoded by the ssrA gene; the 2 termini fold to resemble tRNA(Ala) and it encodes a 'tag peptide', a short internal open reading frame. During trans-translation Ala-aminoacylated tmRNA acts like a tRNA, entering the A-site of stalled ribosomes, displacing the stalled mRNA. The ribosome then switches to translate the ORF on the tmRNA; the nascent peptide is terminated with the 'tag peptide' encoded by the tmRNA and targeted for degradation. The ribosome is freed to recommence translation, which seems to be the essential function of trans-translation. The chain is SsrA-binding protein from Caulobacter vibrioides (strain ATCC 19089 / CIP 103742 / CB 15) (Caulobacter crescentus).